The primary structure comprises 166 residues: MMSRLKTAVYDYLNDVDITECTEMDLLCQLSNCCDFINETYAKNYDTLYDIMERDILSYNIVNIKNTLTFALRDASPSVKLATLTLLASVIKKLNKIQHTDAAMFSEVIDGIVAEEQQVIGFIQKKCKYNTTYYNVRSGGCKISVYLTAAVVGFVAYGILKWYRGT.

A helical membrane pass occupies residues 138-160 (SGGCKISVYLTAAVVGFVAYGIL).

Interacts with host BAX; this interaction inhibits apoptosis activation. Interacts with host BAK1.

It is found in the host mitochondrion. Its subcellular location is the host membrane. In terms of biological role, plays a role in the inhibition of mitochondria-mediated apoptosis by blocking the activation of mitochondria-tranlocalized BAX thereby maintaining pro-apoptotic BAX in an inactive conformation. Also inhibits apoptosis in a BAX-independent manner by interacting with and inhibiting host BAK1. The chain is Apoptosis regulator M11L (m011L) from Myxoma virus (strain Lausanne) (MYXV).